The sequence spans 159 residues: MKRLEKMEVSEKRIKVSEKRSPKIFLSGSIRGGRQLLGTYRFMFDTLEEAGAEVLSWHVADPELEKTEMRMTEEEIYARDMGLLLKSDALIAEVTVPSTGVGYEICRALVQRIPVLCLYSPDASVSAMVLGNPDHLLDARAYPDKASLKKIITEFILAL.

Residues 25 to 31 (FLSGSIR), Tyr-40, His-58, Glu-104, and 126 to 128 (SAM) contribute to the substrate site.

The protein belongs to the 2'-deoxynucleoside 5'-phosphate N-hydrolase 1 family. Monomer and homodimer.

The enzyme catalyses a pyrimidine 2'-deoxyribonucleoside 5'-phosphate + H2O = a pyrimidine nucleobase + 2-deoxy-D-ribose 5-phosphate. It carries out the reaction a purine 2'-deoxyribonucleoside 5'-phosphate + H2O = a purine nucleobase + 2-deoxy-D-ribose 5-phosphate. Its function is as follows. Catalyzes the cleavage of the N-glycosidic bond of deoxyribonucleoside 5'-monophosphates to yield deoxyribose 5-phosphate and a purine or pyrimidine base. This is Putative 2'-deoxynucleoside 5'-phosphate N-hydrolase 1 from Methanosarcina barkeri (strain Fusaro / DSM 804).